Here is a 194-residue protein sequence, read N- to C-terminus: Peptidyl-tRNA hydrolase (194 aa).

Tyr17 contributes to the tRNA binding site. His22 functions as the Proton acceptor in the catalytic mechanism. 3 residues coordinate tRNA: Tyr68, Asn70, and Asn116.

It belongs to the PTH family. Monomer.

It localises to the cytoplasm. It carries out the reaction an N-acyl-L-alpha-aminoacyl-tRNA + H2O = an N-acyl-L-amino acid + a tRNA + H(+). Functionally, hydrolyzes ribosome-free peptidyl-tRNAs (with 1 or more amino acids incorporated), which drop off the ribosome during protein synthesis, or as a result of ribosome stalling. Catalyzes the release of premature peptidyl moieties from peptidyl-tRNA molecules trapped in stalled 50S ribosomal subunits, and thus maintains levels of free tRNAs and 50S ribosomes. The protein is Peptidyl-tRNA hydrolase of Azotobacter vinelandii (strain DJ / ATCC BAA-1303).